Consider the following 164-residue polypeptide: Phosphopantetheine adenylyltransferase (164 aa).

Serine 9 is a substrate binding site. ATP is bound by residues 9–10 and histidine 17; that span reads SF. Positions 41, 74, and 88 each coordinate substrate. Residues 89-91, glutamate 99, and 124-130 each bind ATP; these read GIR and YAEVSST.

It belongs to the bacterial CoaD family. In terms of assembly, homohexamer. It depends on Mg(2+) as a cofactor.

The protein localises to the cytoplasm. It carries out the reaction (R)-4'-phosphopantetheine + ATP + H(+) = 3'-dephospho-CoA + diphosphate. The protein operates within cofactor biosynthesis; coenzyme A biosynthesis; CoA from (R)-pantothenate: step 4/5. In terms of biological role, reversibly transfers an adenylyl group from ATP to 4'-phosphopantetheine, yielding dephospho-CoA (dPCoA) and pyrophosphate. The chain is Phosphopantetheine adenylyltransferase from Chromobacterium violaceum (strain ATCC 12472 / DSM 30191 / JCM 1249 / CCUG 213 / NBRC 12614 / NCIMB 9131 / NCTC 9757 / MK).